Here is a 404-residue protein sequence, read N- to C-terminus: Sorting nexin-32 (404 aa).

The span at 1 to 10 shows a compositional bias: basic and acidic residues; it reads MEEQHQEAGN. The interval 1-29 is disordered; that stretch reads MEEQHQEAGNESKPSSTSVDLQGDSPLQV. Residues 11 to 20 show a composition bias toward polar residues; the sequence is ESKPSSTSVD. The PX domain occupies 21 to 168; it reads LQGDSPLQVE…SVFLEYSQDL (148 aa). The stretch at 255-336 forms a coiled coil; sequence TQEVNQLKRS…KARTRNREVR (82 aa).

It belongs to the sorting nexin family.

May be involved in several stages of intracellular trafficking. The sequence is that of Sorting nexin-32 (Snx32) from Mus musculus (Mouse).